Here is a 360-residue protein sequence, read N- to C-terminus: Peptide chain release factor 1 (360 aa).

Gln-235 carries the post-translational modification N5-methylglutamine. Residues 280–293 (DKQSHEQQAKEAAT) are compositionally biased toward basic and acidic residues. Residues 280 to 300 (DKQSHEQQAKEAATRKSLIGS) are disordered.

The protein belongs to the prokaryotic/mitochondrial release factor family. In terms of processing, methylated by PrmC. Methylation increases the termination efficiency of RF1.

The protein localises to the cytoplasm. Peptide chain release factor 1 directs the termination of translation in response to the peptide chain termination codons UAG and UAA. The polypeptide is Peptide chain release factor 1 (Paraburkholderia phytofirmans (strain DSM 17436 / LMG 22146 / PsJN) (Burkholderia phytofirmans)).